We begin with the raw amino-acid sequence, 150 residues long: Deoxyuridine 5'-triphosphate nucleotidohydrolase (150 aa).

Residues 69-71, Asn-82, and 86-88 each bind substrate; these read RSG and LID.

The protein belongs to the dUTPase family. Mg(2+) serves as cofactor.

It carries out the reaction dUTP + H2O = dUMP + diphosphate + H(+). It functions in the pathway pyrimidine metabolism; dUMP biosynthesis; dUMP from dCTP (dUTP route): step 2/2. Its function is as follows. This enzyme is involved in nucleotide metabolism: it produces dUMP, the immediate precursor of thymidine nucleotides and it decreases the intracellular concentration of dUTP so that uracil cannot be incorporated into DNA. In Chromobacterium violaceum (strain ATCC 12472 / DSM 30191 / JCM 1249 / CCUG 213 / NBRC 12614 / NCIMB 9131 / NCTC 9757 / MK), this protein is Deoxyuridine 5'-triphosphate nucleotidohydrolase.